The primary structure comprises 320 residues: uncharacterized protein (320 aa).

46-53 (DVPGVGKT) contacts ATP.

It belongs to the MoxR family.

This is an uncharacterized protein from Bacillus subtilis (strain 168).